Reading from the N-terminus, the 452-residue chain is UPF0210 protein Cthe_0410 (452 aa).

Belongs to the UPF0210 family. In terms of assembly, homodimer.

The chain is UPF0210 protein Cthe_0410 from Acetivibrio thermocellus (strain ATCC 27405 / DSM 1237 / JCM 9322 / NBRC 103400 / NCIMB 10682 / NRRL B-4536 / VPI 7372) (Clostridium thermocellum).